A 358-amino-acid polypeptide reads, in one-letter code: DNA-directed RNA polymerase subunit alpha (358 aa).

An alpha N-terminal domain (alpha-NTD) region spans residues Met-1–Ser-244. The alpha C-terminal domain (alpha-CTD) stretch occupies residues Tyr-287–Lys-358.

The protein belongs to the RNA polymerase alpha chain family. In terms of assembly, homodimer. The RNAP catalytic core consists of 2 alpha, 1 beta, 1 beta' and 1 omega subunit. When a sigma factor is associated with the core the holoenzyme is formed, which can initiate transcription.

The protein resides in the plastid. It is found in the chloroplast. It carries out the reaction RNA(n) + a ribonucleoside 5'-triphosphate = RNA(n+1) + diphosphate. Its function is as follows. DNA-dependent RNA polymerase catalyzes the transcription of DNA into RNA using the four ribonucleoside triphosphates as substrates. This chain is DNA-directed RNA polymerase subunit alpha (rpoA), found in Bigelowiella natans (Pedinomonas minutissima).